We begin with the raw amino-acid sequence, 480 residues long: Vinorine hydroxylase (480 aa).

The helical transmembrane segment at Leu-3 to Trp-23 threads the bilayer. A heme-binding site is contributed by Cys-418.

This sequence belongs to the cytochrome P450 family. Heme serves as cofactor. In terms of tissue distribution, mainly expressed in roots and, to a lesser extent, in leaves.

The protein resides in the membrane. It carries out the reaction vinorine + reduced [NADPH--hemoprotein reductase] + O2 = vomilenine + oxidized [NADPH--hemoprotein reductase] + H2O + H(+). It catalyses the reaction vomilenine = perakine. Its pathway is alkaloid biosynthesis; ajmaline biosynthesis. Functionally, a cytochrome P450 monooxygenase involved in the biosynthesis of ajmaline-type monoterpenoid indole alkaloids (MIAs) natural products, important plant-derived pharmaceuticals used in the therapy of heart disorders. Catalyzes the hydroxylation of vinorine to vomilenine, an intermediate chemical in the biosynthesis of ajmaline. Supports also vomilenine isomerization to perakine. This Rauvolfia serpentina (Serpentine wood) protein is Vinorine hydroxylase.